The following is a 154-amino-acid chain: Urease accessory protein UreE (154 aa).

The tract at residues 135–154 (YGHGRTFGHDHGHAHDHHHA) is disordered.

Belongs to the UreE family.

It localises to the cytoplasm. Its function is as follows. Involved in urease metallocenter assembly. Binds nickel. Probably functions as a nickel donor during metallocenter assembly. The protein is Urease accessory protein UreE of Paracoccus denitrificans (strain Pd 1222).